We begin with the raw amino-acid sequence, 245 residues long: tRNA pseudouridine synthase A (245 aa).

Residue Asp52 is the Nucleophile of the active site. Tyr110 is a substrate binding site.

Belongs to the tRNA pseudouridine synthase TruA family. As to quaternary structure, homodimer.

The catalysed reaction is uridine(38/39/40) in tRNA = pseudouridine(38/39/40) in tRNA. In terms of biological role, formation of pseudouridine at positions 38, 39 and 40 in the anticodon stem and loop of transfer RNAs. In Borrelia turicatae (strain 91E135), this protein is tRNA pseudouridine synthase A.